We begin with the raw amino-acid sequence, 353 residues long: Chorismate synthase (353 aa).

An NADP(+)-binding site is contributed by Arg48. FMN is bound by residues 125–127 (RSS), 238–239 (NA), Gly278, 293–297 (KPTSS), and Arg319.

Belongs to the chorismate synthase family. Homotetramer. FMNH2 serves as cofactor.

The catalysed reaction is 5-O-(1-carboxyvinyl)-3-phosphoshikimate = chorismate + phosphate. It functions in the pathway metabolic intermediate biosynthesis; chorismate biosynthesis; chorismate from D-erythrose 4-phosphate and phosphoenolpyruvate: step 7/7. In terms of biological role, catalyzes the anti-1,4-elimination of the C-3 phosphate and the C-6 proR hydrogen from 5-enolpyruvylshikimate-3-phosphate (EPSP) to yield chorismate, which is the branch point compound that serves as the starting substrate for the three terminal pathways of aromatic amino acid biosynthesis. This reaction introduces a second double bond into the aromatic ring system. This is Chorismate synthase from Buchnera aphidicola subsp. Cinara cedri (strain Cc).